A 927-amino-acid polypeptide reads, in one-letter code: Isoleucine--tRNA ligase (927 aa).

Positions 60–70 match the 'HIGH' region motif; sequence PYANGNIHLGH. Position 557 (Glu-557) interacts with L-isoleucyl-5'-AMP. Positions 598–602 match the 'KMSKS' region motif; it reads KMSKS. Lys-601 is an ATP binding site. Residues Cys-895, Cys-898, Cys-915, and Cys-918 each coordinate Zn(2+).

This sequence belongs to the class-I aminoacyl-tRNA synthetase family. IleS type 1 subfamily. As to quaternary structure, monomer. It depends on Zn(2+) as a cofactor.

The protein resides in the cytoplasm. It carries out the reaction tRNA(Ile) + L-isoleucine + ATP = L-isoleucyl-tRNA(Ile) + AMP + diphosphate. Its function is as follows. Catalyzes the attachment of isoleucine to tRNA(Ile). As IleRS can inadvertently accommodate and process structurally similar amino acids such as valine, to avoid such errors it has two additional distinct tRNA(Ile)-dependent editing activities. One activity is designated as 'pretransfer' editing and involves the hydrolysis of activated Val-AMP. The other activity is designated 'posttransfer' editing and involves deacylation of mischarged Val-tRNA(Ile). The polypeptide is Isoleucine--tRNA ligase (Syntrophomonas wolfei subsp. wolfei (strain DSM 2245B / Goettingen)).